We begin with the raw amino-acid sequence, 468 residues long: Tissue alpha-L-fucosidase (468 aa).

A signal peptide spans 1-29 (MRAPGERWRPAGAALWLLLLLLLLGATES). Position 172 is a phosphothreonine (T172). N-linked (GlcNAc...) asparagine glycans are attached at residues N243, N270, and N384.

The protein belongs to the glycosyl hydrolase 29 family. As to quaternary structure, homotetramer.

It is found in the lysosome. The enzyme catalyses an alpha-L-fucoside + H2O = L-fucose + an alcohol. The catalysed reaction is a neolactoside IV(2)-alpha-Fuc-nLc4Cer(d18:1(4E)) + H2O = a neolactoside nLc4Cer(d18:1(4E)) + L-fucose. It carries out the reaction a neolactoside IV(2)-alpha-Fuc-nLc4Cer(d18:0) + H2O = a neolactoside nLc4Cer(d18:0) + L-fucose. Alpha-L-fucosidase is responsible for hydrolyzing the alpha-1,6-linked fucose joined to the reducing-end N-acetylglucosamine of the carbohydrate moieties of glycoproteins. This chain is Tissue alpha-L-fucosidase (FUCA1), found in Macaca fascicularis (Crab-eating macaque).